The chain runs to 629 residues: tRNA uridine 5-carboxymethylaminomethyl modification enzyme MnmG (629 aa).

Residues 13–18, Val-125, and Ser-180 each bind FAD; that span reads GGGHAG. Residue 273–287 participates in NAD(+) binding; sequence GPRYCPSIEDKVMRF. Gln-370 is a binding site for FAD.

Belongs to the MnmG family. As to quaternary structure, homodimer. Heterotetramer of two MnmE and two MnmG subunits. FAD is required as a cofactor.

Its subcellular location is the cytoplasm. Functionally, NAD-binding protein involved in the addition of a carboxymethylaminomethyl (cmnm) group at the wobble position (U34) of certain tRNAs, forming tRNA-cmnm(5)s(2)U34. The sequence is that of tRNA uridine 5-carboxymethylaminomethyl modification enzyme MnmG from Shigella flexneri serotype 5b (strain 8401).